We begin with the raw amino-acid sequence, 197 residues long: Putative WUSCHEL-related homeobox 10 (197 aa).

Residues 75–139 (STRPRWTPTT…NRRARSKRKQ (65 aa)) constitute a DNA-binding region (homeobox; WUS-type). A disordered region spans residues 132–168 (RARSKRKQPPTTTITSSQADDAAVTTTEERGRCGDDS). Residues 140–150 (PPTTTITSSQA) are compositionally biased toward polar residues.

This sequence belongs to the WUS homeobox family.

It is found in the nucleus. In terms of biological role, potential transcription factor that plays a central role during developmental processes. This is Putative WUSCHEL-related homeobox 10 (WOX10) from Arabidopsis thaliana (Mouse-ear cress).